Here is a 544-residue protein sequence, read N- to C-terminus: Chaperonin GroEL (544 aa).

ATP contacts are provided by residues 30–33 (TLGP), Lys51, 87–91 (DGTTT), Gly415, 479–481 (NAA), and Asp495.

This sequence belongs to the chaperonin (HSP60) family. In terms of assembly, forms a cylinder of 14 subunits composed of two heptameric rings stacked back-to-back. Interacts with the co-chaperonin GroES.

The protein localises to the cytoplasm. It catalyses the reaction ATP + H2O + a folded polypeptide = ADP + phosphate + an unfolded polypeptide.. Functionally, together with its co-chaperonin GroES, plays an essential role in assisting protein folding. The GroEL-GroES system forms a nano-cage that allows encapsulation of the non-native substrate proteins and provides a physical environment optimized to promote and accelerate protein folding. This chain is Chaperonin GroEL, found in Acinetobacter baylyi (strain ATCC 33305 / BD413 / ADP1).